Consider the following 156-residue polypeptide: MSLDVDIQIASEEADLPSEEQLILWAQAALRETGDREVTIRIVDAEESRELNAQYRGKDKPTNVLSFPFENPPGLTLPLLGDLVICAPVVFNEAVEQQKTAAAHWAHMVIHGMLHLQGYDHIIDEEAEVMESLETELVTSLGFPPPYATNSSLAEG.

Zn(2+)-binding residues include His111, His115, and His121.

Belongs to the endoribonuclease YbeY family. Zn(2+) is required as a cofactor.

It localises to the cytoplasm. Its function is as follows. Single strand-specific metallo-endoribonuclease involved in late-stage 70S ribosome quality control and in maturation of the 3' terminus of the 16S rRNA. This Hahella chejuensis (strain KCTC 2396) protein is Endoribonuclease YbeY.